The sequence spans 742 residues: Collectin-12 (742 aa).

Residues 1–37 (MKDDFAEEEEVQSFGYKRFGIQEGTQCTKCKNNWALK) are Cytoplasmic-facing. A helical; Signal-anchor for type II membrane protein transmembrane segment spans residues 38 to 58 (FSIILLYVLCALLTITVAILG). Topologically, residues 59–742 (YKVVEKMDTV…EREAVPSSIL (684 aa)) are extracellular. The stretch at 104 to 142 (TNSELSTFRSDILDLRQQLQEITEKTSKNKDMLEKLQAN) forms a coiled coil. N-linked (GlcNAc...) asparagine glycans are attached at residues N159, N168, and N271. A coiled-coil region spans residues 220-301 (ITNLQRSVDD…SFTGQMDNIT (82 aa)). Residues 439-608 (TILQGPPGPR…TPASEVNGCP (170 aa)) are disordered. 2 Collagen-like domains span residues 452 to 511 (GDRG…KGSR) and 527 to 586 (GPPG…PGPS). Positions 501-514 (SKGSQGPKGSRGSP) are enriched in low complexity. The segment covering 516–532 (KPGPQGPSGDPGPPGPP) has biased composition (pro residues). Positions 534–556 (KDGLPGPQGPPGFQGLQGTVGEP) are enriched in low complexity. Residues 571–585 (PGMPGPKGPPGPPGP) show a composition bias toward pro residues. Disulfide bonds link C607–C618, C635–C730, and C708–C722. Residues 614–731 (FTDKCYYFSV…CDEINNFICE (118 aa)) form the C-type lectin domain. Positions 644, 646, 650, 670, and 674 each coordinate Ca(2+). Residues K691, Q694, and D696 each coordinate a carbohydrate. Positions 694, 696, 697, 706, 707, 718, 719, and 731 each coordinate Ca(2+). E706 contacts a carbohydrate. A carbohydrate contacts are provided by N718 and D719.

The extracellular domain forms a stable trimer. The extracellular domain interacts with fibrillar amyloid-beta peptide. In terms of tissue distribution, highly expressed in lung, spleen, small and large intestine, stomach and brain. Expressed in neonatal microglia.

Its subcellular location is the membrane. In terms of biological role, scavenger receptor that displays several functions associated with host defense. Promotes binding and phagocytosis of Gram-positive, Gram-negative bacteria and yeast. Mediates the recognition, internalization and degradation of oxidatively modified low density lipoprotein (oxLDL) by vascular endothelial cells. Binds to several carbohydrates including Gal-type ligands, D-galactose, L- and D-fucose, GalNAc, T and Tn antigens in a calcium-dependent manner and internalizes specifically GalNAc in nurse-like cells. Also binds to sialyl Lewis X or a trisaccharide and asialo-orosomucoid (ASOR). The protein is Collectin-12 (Colec12) of Rattus norvegicus (Rat).